The chain runs to 148 residues: SsrA-binding protein (148 aa).

This sequence belongs to the SmpB family.

It is found in the cytoplasm. In terms of biological role, required for rescue of stalled ribosomes mediated by trans-translation. Binds to transfer-messenger RNA (tmRNA), required for stable association of tmRNA with ribosomes. tmRNA and SmpB together mimic tRNA shape, replacing the anticodon stem-loop with SmpB. tmRNA is encoded by the ssrA gene; the 2 termini fold to resemble tRNA(Ala) and it encodes a 'tag peptide', a short internal open reading frame. During trans-translation Ala-aminoacylated tmRNA acts like a tRNA, entering the A-site of stalled ribosomes, displacing the stalled mRNA. The ribosome then switches to translate the ORF on the tmRNA; the nascent peptide is terminated with the 'tag peptide' encoded by the tmRNA and targeted for degradation. The ribosome is freed to recommence translation, which seems to be the essential function of trans-translation. This is SsrA-binding protein from Mycoplasma mycoides subsp. mycoides SC (strain CCUG 32753 / NCTC 10114 / PG1).